The sequence spans 279 residues: MKENEKVIMEKGIHTDFKENMTYGEYLQLDSLLSSQKRLSDHHDEMLFIVIHQASELWMKLILHELNAAIESIKQDKLQPAFKMLARVSKIQSQIIQSWDILATLTPSEYIEFRDSLGQASGFQSYQYRMIEYALGYKTPHALKIYEKDPELHARLHAALHAPSLYDVAIQALVKEGFPIHKDVLNRDITQPYEEDATVEAAWLEVYADVKKYWNLYQLAEKLIDIEDWLQQWRFRHMKTVERIIGHKMGTGGSSGVSYLKRVLDQRFFPELWNVRTKL.

Substrate is bound by residues 48-52 (FIVIH), Y110, and R114. H237 contributes to the heme binding site. T251 lines the substrate pocket.

It belongs to the tryptophan 2,3-dioxygenase family. In terms of assembly, homotetramer. Heme is required as a cofactor.

The catalysed reaction is L-tryptophan + O2 = N-formyl-L-kynurenine. It participates in amino-acid degradation; L-tryptophan degradation via kynurenine pathway; L-kynurenine from L-tryptophan: step 1/2. Its function is as follows. Heme-dependent dioxygenase that catalyzes the oxidative cleavage of the L-tryptophan (L-Trp) pyrrole ring and converts L-tryptophan to N-formyl-L-kynurenine. Catalyzes the oxidative cleavage of the indole moiety. In Bacillus cereus (strain ZK / E33L), this protein is Tryptophan 2,3-dioxygenase.